The chain runs to 77 residues: UPF0248 protein Pcal_0252 (77 aa).

This sequence belongs to the UPF0248 family.

The sequence is that of UPF0248 protein Pcal_0252 from Pyrobaculum calidifontis (strain DSM 21063 / JCM 11548 / VA1).